Here is a 281-residue protein sequence, read N- to C-terminus: 4-diphosphocytidyl-2-C-methyl-D-erythritol kinase (281 aa).

K11 is a catalytic residue. Residue 92–102 (LVSAGLAGGSA) participates in ATP binding. D132 is an active-site residue.

This sequence belongs to the GHMP kinase family. IspE subfamily.

It catalyses the reaction 4-CDP-2-C-methyl-D-erythritol + ATP = 4-CDP-2-C-methyl-D-erythritol 2-phosphate + ADP + H(+). It functions in the pathway isoprenoid biosynthesis; isopentenyl diphosphate biosynthesis via DXP pathway; isopentenyl diphosphate from 1-deoxy-D-xylulose 5-phosphate: step 3/6. Functionally, catalyzes the phosphorylation of the position 2 hydroxy group of 4-diphosphocytidyl-2C-methyl-D-erythritol. The sequence is that of 4-diphosphocytidyl-2-C-methyl-D-erythritol kinase from Ehrlichia ruminantium (strain Welgevonden).